The primary structure comprises 299 residues: Glycine--tRNA ligase alpha subunit (299 aa).

It belongs to the class-II aminoacyl-tRNA synthetase family. Tetramer of two alpha and two beta subunits.

It localises to the cytoplasm. It catalyses the reaction tRNA(Gly) + glycine + ATP = glycyl-tRNA(Gly) + AMP + diphosphate. This chain is Glycine--tRNA ligase alpha subunit, found in Dictyoglomus turgidum (strain DSM 6724 / Z-1310).